A 99-amino-acid polypeptide reads, in one-letter code: Large ribosomal subunit protein eL36A (99 aa).

This sequence belongs to the eukaryotic ribosomal protein eL36 family. In terms of assembly, component of the large ribosomal subunit (LSU). Mature yeast ribosomes consist of a small (40S) and a large (60S) subunit. The 40S small subunit contains 1 molecule of ribosomal RNA (18S rRNA) and at least 33 different proteins. The large 60S subunit contains 3 rRNA molecules (25S, 5.8S and 5S rRNA) and at least 46 different proteins.

The protein resides in the cytoplasm. In terms of biological role, component of the ribosome, a large ribonucleoprotein complex responsible for the synthesis of proteins in the cell. The small ribosomal subunit (SSU) binds messenger RNAs (mRNAs) and translates the encoded message by selecting cognate aminoacyl-transfer RNA (tRNA) molecules. The large subunit (LSU) contains the ribosomal catalytic site termed the peptidyl transferase center (PTC), which catalyzes the formation of peptide bonds, thereby polymerizing the amino acids delivered by tRNAs into a polypeptide chain. The nascent polypeptides leave the ribosome through a tunnel in the LSU and interact with protein factors that function in enzymatic processing, targeting, and the membrane insertion of nascent chains at the exit of the ribosomal tunnel. The sequence is that of Large ribosomal subunit protein eL36A (rpl3601) from Schizosaccharomyces pombe (strain 972 / ATCC 24843) (Fission yeast).